The chain runs to 227 residues: Ribonuclease 3 (227 aa).

The RNase III domain maps to 4-133; sequence FEKLETLLGY…LIAAIYLDSN (130 aa). Glu46 provides a ligand contact to Mg(2+). Asp50 is an active-site residue. Residues Asn119 and Glu122 each contribute to the Mg(2+) site. The active site involves Glu122. In terms of domain architecture, DRBM spans 158–226; the sequence is DPKTALQEWA…ARCLLHRLKN (69 aa).

Belongs to the ribonuclease III family. As to quaternary structure, homodimer. The cofactor is Mg(2+).

It localises to the cytoplasm. The enzyme catalyses Endonucleolytic cleavage to 5'-phosphomonoester.. Functionally, digests double-stranded RNA. Involved in the processing of primary rRNA transcript to yield the immediate precursors to the large and small rRNAs (23S and 16S). Processes some mRNAs, and tRNAs when they are encoded in the rRNA operon. Processes pre-crRNA and tracrRNA of type II CRISPR loci if present in the organism. This Rickettsia typhi (strain ATCC VR-144 / Wilmington) protein is Ribonuclease 3.